The sequence spans 488 residues: Bifunctional pantoate ligase/cytidylate kinase (488 aa).

1–8 (MGALHRAH) contacts ATP. The interval 1–251 (MGALHRAHGQ…CGETRLIDHT (251 aa)) is pantoate--beta-alanine ligase. H8 functions as the Proton donor in the catalytic mechanism. Q36 serves as a coordination point for (R)-pantoate. A beta-alanine-binding site is contributed by Q36. Residue 125–128 (GEKD) participates in ATP binding. Q131 provides a ligand contact to (R)-pantoate. ATP contacts are provided by residues V154 and 162–165 (CSSR). Residues 252–488 (FLMSRQPIVA…PEEVWPTPGS (237 aa)) form a cytidylate kinase region.

This sequence in the N-terminal section; belongs to the pantothenate synthetase family. It in the C-terminal section; belongs to the cytidylate kinase family. Type 1 subfamily.

It is found in the cytoplasm. The catalysed reaction is (R)-pantoate + beta-alanine + ATP = (R)-pantothenate + AMP + diphosphate + H(+). It catalyses the reaction CMP + ATP = CDP + ADP. It carries out the reaction dCMP + ATP = dCDP + ADP. It participates in cofactor biosynthesis; (R)-pantothenate biosynthesis; (R)-pantothenate from (R)-pantoate and beta-alanine: step 1/1. Its function is as follows. Catalyzes the condensation of pantoate with beta-alanine in an ATP-dependent reaction via a pantoyl-adenylate intermediate. Functionally, catalyzes the transfer of a phosphate group from ATP to either CMP or dCMP to form CDP or dCDP and ADP, respectively. This chain is Bifunctional pantoate ligase/cytidylate kinase, found in Prochlorococcus marinus (strain MIT 9303).